The sequence spans 219 residues: Transcriptional regulatory protein QseB (219 aa).

In terms of domain architecture, Response regulatory spans 2–116 (RILLIEDDML…EVAARLEALM (115 aa)). Asp51 carries the post-translational modification 4-aspartylphosphate. Residues 124–218 (SNELRHGNVM…VHGIGYTLGE (95 aa)) constitute a DNA-binding region (ompR/PhoB-type).

Phosphorylated by QseC.

Its subcellular location is the cytoplasm. Its function is as follows. Member of a two-component regulatory system QseB/QseC. Activates the flagella regulon by activating transcription of FlhDC. Currently it is not known whether this effect is direct or not. This chain is Transcriptional regulatory protein QseB (qseB), found in Escherichia coli O157:H7.